Here is a 218-residue protein sequence, read N- to C-terminus: Protein N-lysine methyltransferase METTL21A (218 aa).

S-adenosyl-L-methionine is bound by residues tryptophan 47, glycine 73 to glycine 75, aspartate 94, tryptophan 125, and alanine 143.

The protein belongs to the methyltransferase superfamily. METTL21 family. Interacts with heat shock 70 family members; at least some of these proteins are methylation substrates.

The protein localises to the cytoplasm. It catalyses the reaction L-lysyl-[protein] + 3 S-adenosyl-L-methionine = N(6),N(6),N(6)-trimethyl-L-lysyl-[protein] + 3 S-adenosyl-L-homocysteine + 3 H(+). In terms of biological role, protein-lysine methyltransferase that selectively trimethylates residues in heat shock protein 70 (HSP70) family members. Contributes to the in vivo trimethylation of Lys residues in HSPA1 and HSPA8. In vitro methylates 'Lys-561' in HSPA1, 'Lys-564' in HSPA2, 'Lys-585' in HSPA5, 'Lys-563' in HSPA6 and 'Lys-561' in HSPA8. This is Protein N-lysine methyltransferase METTL21A (Mettl21A) from Mus musculus (Mouse).